A 101-amino-acid chain; its full sequence is Small ribosomal subunit protein uS14 (101 aa).

The segment at 1–21 (MAKTSAVEKNKRRRKSVAQQA) is disordered.

This sequence belongs to the universal ribosomal protein uS14 family. Part of the 30S ribosomal subunit. Contacts proteins S3 and S10.

Functionally, binds 16S rRNA, required for the assembly of 30S particles and may also be responsible for determining the conformation of the 16S rRNA at the A site. In Agrobacterium fabrum (strain C58 / ATCC 33970) (Agrobacterium tumefaciens (strain C58)), this protein is Small ribosomal subunit protein uS14.